A 303-amino-acid chain; its full sequence is ATP phosphoribosyltransferase (303 aa).

This sequence belongs to the ATP phosphoribosyltransferase family. Long subfamily. The cofactor is Mg(2+).

It is found in the cytoplasm. It carries out the reaction 1-(5-phospho-beta-D-ribosyl)-ATP + diphosphate = 5-phospho-alpha-D-ribose 1-diphosphate + ATP. It functions in the pathway amino-acid biosynthesis; L-histidine biosynthesis; L-histidine from 5-phospho-alpha-D-ribose 1-diphosphate: step 1/9. Feedback inhibited by histidine. Its function is as follows. Catalyzes the condensation of ATP and 5-phosphoribose 1-diphosphate to form N'-(5'-phosphoribosyl)-ATP (PR-ATP). Has a crucial role in the pathway because the rate of histidine biosynthesis seems to be controlled primarily by regulation of HisG enzymatic activity. The polypeptide is ATP phosphoribosyltransferase (Stenotrophomonas maltophilia (strain R551-3)).